A 760-amino-acid polypeptide reads, in one-letter code: Catecholate siderophore receptor Fiu (760 aa).

An N-terminal signal peptide occupies residues 1–31 (MENNRNFPARQFHSLTFFAGLCIGITPVAQA). A TBDR plug domain is found at 67 to 175 (PVADTTRTMT…PTGSINMISK (109 aa)). Residues 180 to 760 (DSGIDASASI…TFLLTANMHF (581 aa)) enclose the TBDR beta-barrel domain. The TonB C-terminal box motif lies at 743 to 760 (RYHPGEPRTFLLTANMHF).

The protein belongs to the TonB-dependent receptor family.

It localises to the cell outer membrane. Its function is as follows. Involved in the active transport across the outer membrane of iron complexed with catecholate siderophores such as dihydroxybenzoylserine and dihydroxybenzoate. It derives its energy for transport by interacting with the trans-periplasmic membrane protein TonB. Can also transport catechol-substituted cephalosporins. Receptor for microcins M, H47 and E492. The polypeptide is Catecholate siderophore receptor Fiu (fiu) (Escherichia coli O6:H1 (strain CFT073 / ATCC 700928 / UPEC)).